Reading from the N-terminus, the 191-residue chain is Fe/S biogenesis protein NfuA (191 aa).

Positions 149 and 152 each coordinate [4Fe-4S] cluster.

It belongs to the NfuA family. In terms of assembly, homodimer. It depends on [4Fe-4S] cluster as a cofactor.

In terms of biological role, involved in iron-sulfur cluster biogenesis. Binds a 4Fe-4S cluster, can transfer this cluster to apoproteins, and thereby intervenes in the maturation of Fe/S proteins. Could also act as a scaffold/chaperone for damaged Fe/S proteins. This is Fe/S biogenesis protein NfuA from Klebsiella pneumoniae (strain 342).